The following is a 488-amino-acid chain: Proline--tRNA ligase (488 aa).

This sequence belongs to the class-II aminoacyl-tRNA synthetase family. ProS type 3 subfamily. As to quaternary structure, homodimer.

It is found in the cytoplasm. The enzyme catalyses tRNA(Pro) + L-proline + ATP = L-prolyl-tRNA(Pro) + AMP + diphosphate. Functionally, catalyzes the attachment of proline to tRNA(Pro) in a two-step reaction: proline is first activated by ATP to form Pro-AMP and then transferred to the acceptor end of tRNA(Pro). The protein is Proline--tRNA ligase of Symbiobacterium thermophilum (strain DSM 24528 / JCM 14929 / IAM 14863 / T).